Reading from the N-terminus, the 95-residue chain is Aspartyl/glutamyl-tRNA(Asn/Gln) amidotransferase subunit C (95 aa).

It belongs to the GatC family. As to quaternary structure, heterotrimer of A, B and C subunits.

It catalyses the reaction L-glutamyl-tRNA(Gln) + L-glutamine + ATP + H2O = L-glutaminyl-tRNA(Gln) + L-glutamate + ADP + phosphate + H(+). The enzyme catalyses L-aspartyl-tRNA(Asn) + L-glutamine + ATP + H2O = L-asparaginyl-tRNA(Asn) + L-glutamate + ADP + phosphate + 2 H(+). Allows the formation of correctly charged Asn-tRNA(Asn) or Gln-tRNA(Gln) through the transamidation of misacylated Asp-tRNA(Asn) or Glu-tRNA(Gln) in organisms which lack either or both of asparaginyl-tRNA or glutaminyl-tRNA synthetases. The reaction takes place in the presence of glutamine and ATP through an activated phospho-Asp-tRNA(Asn) or phospho-Glu-tRNA(Gln). In Chromobacterium violaceum (strain ATCC 12472 / DSM 30191 / JCM 1249 / CCUG 213 / NBRC 12614 / NCIMB 9131 / NCTC 9757 / MK), this protein is Aspartyl/glutamyl-tRNA(Asn/Gln) amidotransferase subunit C.